The primary structure comprises 490 residues: Aspartyl/glutamyl-tRNA(Asn/Gln) amidotransferase subunit B (490 aa).

It belongs to the GatB/GatE family. GatB subfamily. As to quaternary structure, heterotrimer of A, B and C subunits.

It carries out the reaction L-glutamyl-tRNA(Gln) + L-glutamine + ATP + H2O = L-glutaminyl-tRNA(Gln) + L-glutamate + ADP + phosphate + H(+). The enzyme catalyses L-aspartyl-tRNA(Asn) + L-glutamine + ATP + H2O = L-asparaginyl-tRNA(Asn) + L-glutamate + ADP + phosphate + 2 H(+). In terms of biological role, allows the formation of correctly charged Asn-tRNA(Asn) or Gln-tRNA(Gln) through the transamidation of misacylated Asp-tRNA(Asn) or Glu-tRNA(Gln) in organisms which lack either or both of asparaginyl-tRNA or glutaminyl-tRNA synthetases. The reaction takes place in the presence of glutamine and ATP through an activated phospho-Asp-tRNA(Asn) or phospho-Glu-tRNA(Gln). This Burkholderia ambifaria (strain MC40-6) protein is Aspartyl/glutamyl-tRNA(Asn/Gln) amidotransferase subunit B.